Consider the following 235-residue polypeptide: Claudin-15 (235 aa).

Residue M1 is a topological domain, cytoplasmic. Residues L2–L24 traverse the membrane as a helical segment. The Extracellular portion of the chain corresponds to A25–Y74. A disulfide bridge links C52 with C62. A helical transmembrane segment spans residues I75–G99. The Cytoplasmic segment spans residues L100–K115. Residue S111 is modified to Phosphoserine. A helical membrane pass occupies residues L116–F140. At N141–G159 the chain is on the extracellular side. The segment at F146–F147 is important for the formation of tight-junction strand-like structures. A helical transmembrane segment spans residues P160–N182. Topologically, residues C183–V235 are cytoplasmic. Phosphoserine is present on residues S218 and S225.

This sequence belongs to the claudin family. Can form homo- and heteropolymeric tight junction strands. Palmitoylated.

The protein localises to the cell junction. The protein resides in the tight junction. It is found in the cell membrane. The enzyme catalyses Na(+)(in) = Na(+)(out). It carries out the reaction K(+)(in) = K(+)(out). The catalysed reaction is Cs(+)(in) = Cs(+)(out). It catalyses the reaction Rb(+)(in) = Rb(+)(out). The enzyme catalyses Li(+)(in) = Li(+)(out). It carries out the reaction NH4(+)(in) = NH4(+)(out). The catalysed reaction is methylamine(out) = methylamine(in). It catalyses the reaction H2O(in) = H2O(out). Its function is as follows. Forms paracellular channels: polymerizes in tight junction strands with cation- and water-selective channels through the strands, conveying epithelial permeability in a process known as paracellular tight junction permeability. In intestinal epithelium, allows for sodium and water fluxes from the peritoneal side to the lumen of the intestine to regulate nutrient absorption and intestinal morphogenesis. The protein is Claudin-15 (CLDN15) of Bos taurus (Bovine).